A 490-amino-acid polypeptide reads, in one-letter code: Myocilin (490 aa).

The first 18 residues, 1–18 (MPAVQLLLLACLLGGVGA), serve as a signal peptide directing secretion. Residues 51-170 (GQAMLAIQEL…QEVASLRRGQ (120 aa)) are a coiled coil. The disordered stretch occupies residues 152-186 (LARRLESSSQEVASLRRGQCPQAHSSSQDVPSGSR). Residues 173 to 182 (QAHSSSQDVP) show a composition bias toward polar residues. The Olfactomedin-like domain occupies 230–489 (GCGELVWVGE…MVSYDIKLSR (260 aa)). Cys-231 and Cys-419 form a disulfide bridge. Positions 366, 414, 415, 463, and 464 each coordinate Ca(2+). A Microbody targeting signal motif is present at residues 488–490 (SRL).

In terms of assembly, homodimer (via N-terminus). Can also form higher oligomers. Interacts with OLFM3, FN1, NRCAM, GLDN and NFASC. Interacts (via N-terminus) with MYL2. Interacts with SFRP1, FRZB, FZD7, FZD10, FZD1 and WIF1; regulates Wnt signaling. Interacts with SNTA1; regulates muscle hypertrophy. Interacts with ERBB2 and ERBB3; activates ERBB2-ERBB3 signaling pathway. Interacts with SNCG; affects its secretion and its aggregation. Palmitoylated. In terms of processing, undergoes a calcium-dependent proteolytic cleavage at Gln-212 by CAPN2 in the endoplasmic reticulum. The result is the production of two fragments, one of 35 kDa containing the C-terminal olfactomedin-like domain, and another of 20 kDa containing the N-terminal leucine zipper-like domain. Post-translationally, glycosylated. In terms of tissue distribution, the myocilin 35 kDa fragment is detected in iris and ciliary body.

The protein localises to the secreted. It localises to the golgi apparatus. Its subcellular location is the cytoplasmic vesicle. It is found in the extracellular space. The protein resides in the extracellular matrix. The protein localises to the extracellular exosome. It localises to the mitochondrion. Its subcellular location is the mitochondrion intermembrane space. It is found in the mitochondrion inner membrane. The protein resides in the mitochondrion outer membrane. The protein localises to the rough endoplasmic reticulum. It localises to the cell projection. Its subcellular location is the cilium. It is found in the endoplasmic reticulum. Functionally, secreted glycoprotein regulating the activation of different signaling pathways in adjacent cells to control different processes including cell adhesion, cell-matrix adhesion, cytoskeleton organization and cell migration. Promotes substrate adhesion, spreading and formation of focal contacts. Negatively regulates cell-matrix adhesion and stress fiber assembly through Rho protein signal transduction. Modulates the organization of actin cytoskeleton by stimulating the formation of stress fibers through interactions with components of Wnt signaling pathways. Promotes cell migration through activation of PTK2 and the downstream phosphatidylinositol 3-kinase signaling. Plays a role in bone formation and promotes osteoblast differentiation in a dose-dependent manner through mitogen-activated protein kinase signaling. Mediates myelination in the peripheral nervous system through ERBB2/ERBB3 signaling. Plays a role as a regulator of muscle hypertrophy through the components of dystrophin-associated protein complex. Involved in positive regulation of mitochondrial depolarization. Plays a role in neurite outgrowth. May participate in the obstruction of fluid outflow in the trabecular meshwork. This chain is Myocilin (MYOC), found in Bos taurus (Bovine).